A 22-amino-acid chain; its full sequence is Proline-rich peptide (22 aa).

Residues 1–22 (FVDRNRIPRSNNGPKIPIISNP) are disordered.

Its subcellular location is the secreted. Antibacterial peptide active against Gram-positive bacterium M.luteus and Gram-negative bacterium E.coli. In Calliphora vicina (Blue blowfly), this protein is Proline-rich peptide.